The following is a 173-amino-acid chain: Translation initiation factor IF-3 (173 aa).

The protein belongs to the IF-3 family. Monomer.

The protein localises to the cytoplasm. Its function is as follows. IF-3 binds to the 30S ribosomal subunit and shifts the equilibrium between 70S ribosomes and their 50S and 30S subunits in favor of the free subunits, thus enhancing the availability of 30S subunits on which protein synthesis initiation begins. The chain is Translation initiation factor IF-3 from Methylobacterium radiotolerans (strain ATCC 27329 / DSM 1819 / JCM 2831 / NBRC 15690 / NCIMB 10815 / 0-1).